Reading from the N-terminus, the 503-residue chain is Probable cytosol aminopeptidase (503 aa).

Mn(2+) is bound by residues K270 and D275. K282 is an active-site residue. The Mn(2+) site is built by D293, D352, and E354. R356 is an active-site residue.

It belongs to the peptidase M17 family. Requires Mn(2+) as cofactor.

The protein localises to the cytoplasm. The enzyme catalyses Release of an N-terminal amino acid, Xaa-|-Yaa-, in which Xaa is preferably Leu, but may be other amino acids including Pro although not Arg or Lys, and Yaa may be Pro. Amino acid amides and methyl esters are also readily hydrolyzed, but rates on arylamides are exceedingly low.. It carries out the reaction Release of an N-terminal amino acid, preferentially leucine, but not glutamic or aspartic acids.. Functionally, presumably involved in the processing and regular turnover of intracellular proteins. Catalyzes the removal of unsubstituted N-terminal amino acids from various peptides. The chain is Probable cytosol aminopeptidase from Sodalis glossinidius (strain morsitans).